We begin with the raw amino-acid sequence, 621 residues long: 1-deoxy-D-xylulose-5-phosphate synthase (621 aa).

Residues His80 and 121 to 123 (GHS) contribute to the thiamine diphosphate site. Asp152 serves as a coordination point for Mg(2+). Residues 153–154 (GA), Asn181, Tyr288, and Glu371 each bind thiamine diphosphate. A Mg(2+)-binding site is contributed by Asn181.

It belongs to the transketolase family. DXPS subfamily. Homodimer. Mg(2+) serves as cofactor. Thiamine diphosphate is required as a cofactor.

It carries out the reaction D-glyceraldehyde 3-phosphate + pyruvate + H(+) = 1-deoxy-D-xylulose 5-phosphate + CO2. It participates in metabolic intermediate biosynthesis; 1-deoxy-D-xylulose 5-phosphate biosynthesis; 1-deoxy-D-xylulose 5-phosphate from D-glyceraldehyde 3-phosphate and pyruvate: step 1/1. Catalyzes the acyloin condensation reaction between C atoms 2 and 3 of pyruvate and glyceraldehyde 3-phosphate to yield 1-deoxy-D-xylulose-5-phosphate (DXP). The sequence is that of 1-deoxy-D-xylulose-5-phosphate synthase from Pectobacterium atrosepticum (strain SCRI 1043 / ATCC BAA-672) (Erwinia carotovora subsp. atroseptica).